We begin with the raw amino-acid sequence, 930 residues long: Translation initiation factor IF-2 (930 aa).

The tract at residues 51-325 is disordered; that stretch reads PGAGKSAAKP…TREIGGVKVP (275 aa). Composition is skewed to low complexity over residues 56–111 and 121–162; these read SAAK…KPGV and TPAA…GNNP. Gly residues predominate over residues 263 to 295; sequence RPGGGPGGGPGRPGGPGGRGGRGNAQGAFGRGG. Over residues 296 to 307 the composition is skewed to basic residues; that stretch reads GPRKGRKSKRAK. Positions 308 to 320 are enriched in basic and acidic residues; that stretch reads RQEFEQQHTREIG. A tr-type G domain is found at 422-596; it reads PRPAVVTVMG…LTADAALELT (175 aa). The tract at residues 431–438 is G1; that stretch reads GHVDHGKT. A GTP-binding site is contributed by 431–438; it reads GHVDHGKT. Residues 456-460 form a G2 region; sequence GITQH. The segment at 481–484 is G3; it reads DTPG. Residues 481–485 and 535–538 each bind GTP; these read DTPGH and NKID. Residues 535 to 538 are G4; sequence NKID. A G5 region spans residues 571–573; sequence SAR.

It belongs to the TRAFAC class translation factor GTPase superfamily. Classic translation factor GTPase family. IF-2 subfamily.

It localises to the cytoplasm. Functionally, one of the essential components for the initiation of protein synthesis. Protects formylmethionyl-tRNA from spontaneous hydrolysis and promotes its binding to the 30S ribosomal subunits. Also involved in the hydrolysis of GTP during the formation of the 70S ribosomal complex. The sequence is that of Translation initiation factor IF-2 from Micrococcus luteus (strain ATCC 4698 / DSM 20030 / JCM 1464 / CCM 169 / CCUG 5858 / IAM 1056 / NBRC 3333 / NCIMB 9278 / NCTC 2665 / VKM Ac-2230) (Micrococcus lysodeikticus).